We begin with the raw amino-acid sequence, 228 residues long: PKHD-type hydroxylase Rmet_0838 (228 aa).

One can recognise a Fe2OG dioxygenase domain in the interval 78 to 179 (RVLPPMFNRY…RWASFFWAQS (102 aa)). His96, Asp98, and His160 together coordinate Fe cation. Arg170 is a 2-oxoglutarate binding site.

It depends on Fe(2+) as a cofactor. Requires L-ascorbate as cofactor.

This Cupriavidus metallidurans (strain ATCC 43123 / DSM 2839 / NBRC 102507 / CH34) (Ralstonia metallidurans) protein is PKHD-type hydroxylase Rmet_0838.